Reading from the N-terminus, the 216-residue chain is Outer-membrane lipoprotein LolB (216 aa).

An N-terminal signal peptide occupies residues 1–24; sequence MNNLNYFTKISASCAALALMTLAG. Cys25 carries the N-palmitoyl cysteine lipid modification. Cys25 carries S-diacylglycerol cysteine lipidation.

Belongs to the LolB family. Monomer.

Its subcellular location is the cell outer membrane. In terms of biological role, plays a critical role in the incorporation of lipoproteins in the outer membrane after they are released by the LolA protein. The chain is Outer-membrane lipoprotein LolB from Shewanella loihica (strain ATCC BAA-1088 / PV-4).